The primary structure comprises 584 residues: Probable DNA ligase (584 aa).

ATP is bound at residue Glu248. Catalysis depends on Lys250, which acts as the N6-AMP-lysine intermediate. Residues Arg255, Arg270, Glu299, Phe339, Arg416, and Lys422 each contribute to the ATP site.

This sequence belongs to the ATP-dependent DNA ligase family. The cofactor is Mg(2+).

The catalysed reaction is ATP + (deoxyribonucleotide)n-3'-hydroxyl + 5'-phospho-(deoxyribonucleotide)m = (deoxyribonucleotide)n+m + AMP + diphosphate.. In terms of biological role, DNA ligase that seals nicks in double-stranded DNA during DNA replication, DNA recombination and DNA repair. In Aquifex aeolicus (strain VF5), this protein is Probable DNA ligase.